A 102-amino-acid polypeptide reads, in one-letter code: UPF0235 protein Noc_3000 (102 aa).

This sequence belongs to the UPF0235 family.

In Nitrosococcus oceani (strain ATCC 19707 / BCRC 17464 / JCM 30415 / NCIMB 11848 / C-107), this protein is UPF0235 protein Noc_3000.